Consider the following 175-residue polypeptide: Translation initiation factor IF-3, chloroplastic (175 aa).

It belongs to the IF-3 family. In terms of assembly, monomer.

It localises to the plastid. Its subcellular location is the chloroplast. In terms of biological role, IF-3 binds to the 30S ribosomal subunit and shifts the equilibrium between 70S ribosomes and their 50S and 30S subunits in favor of the free subunits, thus enhancing the availability of 30S subunits on which protein synthesis initiation begins. The protein is Translation initiation factor IF-3, chloroplastic of Cyanidioschyzon merolae (strain NIES-3377 / 10D) (Unicellular red alga).